A 206-amino-acid chain; its full sequence is Flavin reductase (NADPH) (206 aa).

NADP(+) contacts are provided by Gly-10, Thr-12, Gly-13, Asn-14, Thr-15, Arg-35, Ser-38, and Arg-39. Ser-42 is modified (phosphoserine). The NADP(+) site is built by Asp-54, Val-55, Leu-75, Gly-76, and Arg-78. At Ser-82 the chain carries Phosphoserine. Residues Met-87, Cys-109, His-132, His-153, and Ile-154 each contribute to the NADP(+) site. Residue Cys-109 is the S-nitroso-cysteine intermediate; for S-nitroso-CoA-dependent nitrosyltransferase activity of the active site. The S-nitroso-cysteine intermediate; for S-nitroso-CoA-dependent nitrosyltransferase activity role is filled by Cys-188.

As to quaternary structure, monomer. At least expressed in the liver and erythrocyte.

It localises to the cytoplasm. The enzyme catalyses reduced riboflavin + NADP(+) = riboflavin + NADPH + 2 H(+). The catalysed reaction is bilirubin IXbeta + NADP(+) = biliverdin IXbeta + NADPH + H(+). It catalyses the reaction FMNH2 + NAD(+) = FMN + NADH + 2 H(+). It carries out the reaction FMNH2 + NADP(+) = FMN + NADPH + 2 H(+). The enzyme catalyses S-nitroso-CoA + L-cysteinyl-[protein] = S-nitroso-L-cysteinyl-[protein] + CoA. The catalysed reaction is L-cysteinyl-[SCAN] + S-nitroso-CoA = S-nitroso-L-cysteinyl-[SCAN] + CoA. It catalyses the reaction S-nitroso-L-cysteinyl-[SCAN] + L-cysteinyl-[protein] = L-cysteinyl-[SCAN] + S-nitroso-L-cysteinyl-[protein]. In terms of biological role, enzyme that can both act as a NAD(P)H-dependent reductase and a S-nitroso-CoA-dependent nitrosyltransferase. Promotes fetal heme degradation during development. Also expressed in adult tissues, where it acts as a regulator of hematopoiesis, intermediary metabolism (glutaminolysis, glycolysis, TCA cycle and pentose phosphate pathway) and insulin signaling. Has a broad specificity oxidoreductase activity by catalyzing the NAD(P)H-dependent reduction of a variety of flavins, such as riboflavin, FAD or FMN, biliverdins, methemoglobin and PQQ (pyrroloquinoline quinone). Contributes to fetal heme catabolism by catalyzing reduction of biliverdin IXbeta into bilirubin IXbeta in the liver. Biliverdin IXbeta, which constitutes the major heme catabolite in the fetus is not present in adult. Does not reduce bilirubin IXalpha. Can also reduce the complexed Fe(3+) iron to Fe(2+) in the presence of FMN and NADPH. Acts as a protein nitrosyltransferase by catalyzing nitrosylation of cysteine residues of target proteins, such as HMOX2, INSR and IRS1. S-nitroso-CoA-dependent nitrosyltransferase activity is mediated via a 'ping-pong' mechanism: BLVRB first associates with both S-nitroso-CoA and protein substrate, nitric oxide group is then transferred from S-nitroso-CoA to Cys-109 and Cys-188 residues of BLVRB and from S-nitroso-BLVRB to the protein substrate. Inhibits insulin signaling by mediating nitrosylation of INSR and IRS1, leading to their inhibition. The sequence is that of Flavin reductase (NADPH) (BLVRB) from Bos taurus (Bovine).